The sequence spans 104 residues: Large ribosomal subunit protein uL24 (104 aa).

The protein belongs to the universal ribosomal protein uL24 family. In terms of assembly, part of the 50S ribosomal subunit.

One of two assembly initiator proteins, it binds directly to the 5'-end of the 23S rRNA, where it nucleates assembly of the 50S subunit. Its function is as follows. One of the proteins that surrounds the polypeptide exit tunnel on the outside of the subunit. In Caulobacter vibrioides (strain ATCC 19089 / CIP 103742 / CB 15) (Caulobacter crescentus), this protein is Large ribosomal subunit protein uL24.